We begin with the raw amino-acid sequence, 208 residues long: Cytochrome c oxidase assembly protein CtaG (208 aa).

Topologically, residues Met-1–Gly-19 are cytoplasmic. A helical; Signal-anchor for type II membrane protein membrane pass occupies residues Arg-20 to Ala-42. Topologically, residues Val-43–Leu-208 are periplasmic.

This sequence belongs to the COX11/CtaG family.

It localises to the cell inner membrane. Functionally, exerts its effect at some terminal stage of cytochrome c oxidase synthesis, probably by being involved in the insertion of the copper B into subunit I. In Rhodopseudomonas palustris (strain HaA2), this protein is Cytochrome c oxidase assembly protein CtaG.